We begin with the raw amino-acid sequence, 193 residues long: Cysteine and glycine-rich protein 1 (193 aa).

Positions 10–61 constitute an LIM zinc-binding 1 domain; it reads CGVCQKTVYFAEEVQCEGSSFHKSCFLCLVCKKNLDSTTVAVHGEEIYCKSC. Residues 64–69 carry the Nuclear localization signal motif; sequence KKYGPK. At serine 81 the chain carries Phosphoserine. 5 positions are modified to N6-acetyllysine: lysine 84, lysine 112, lysine 131, lysine 137, and lysine 161. The LIM zinc-binding 2 domain occupies 119–170; sequence CPRCSQAVYAAEKVIGAGKSWHKSCFRCAKCGKGLESTTLADKDGEIYCKGC. Serine 192 carries the post-translational modification Phosphoserine.

In terms of assembly, interacts with ASCC1; ASCC2 and TRIP4.

It is found in the nucleus. Functionally, could play a role in neuronal development. The polypeptide is Cysteine and glycine-rich protein 1 (CSRP1) (Bos taurus (Bovine)).